Here is a 450-residue protein sequence, read N- to C-terminus: Probable malate:quinone oxidoreductase (450 aa).

Belongs to the MQO family. It depends on FAD as a cofactor.

It carries out the reaction (S)-malate + a quinone = a quinol + oxaloacetate. It functions in the pathway carbohydrate metabolism; tricarboxylic acid cycle; oxaloacetate from (S)-malate (quinone route): step 1/1. This chain is Probable malate:quinone oxidoreductase, found in Helicobacter pylori (strain P12).